A 339-amino-acid polypeptide reads, in one-letter code: UPF0324 membrane protein M6_Spy0799 (339 aa).

The next 9 helical transmembrane spans lie at 7 to 24 (KLPGLLLCLLLALPAWYL), 28 to 50 (FPIIGAPVFAILLGMLLALFYEH), 57 to 79 (GISFTSKYILQTAVVLLGFGLNL), 84 to 106 (AVGMQSLPIIISTIATALLVAYG), 118 to 140 (ATLVGVGSSICGGSAIAATAPVI), 150 to 172 (AISVIFLFNMLAALLFPSLGQLL), 256 to 275 (FILFFLLASLITTLMISLGV), 290 to 307 (FIVMAMAAIGLNTNLVKL), and 314 to 336 (AILLGAICWVAITLVSLAMQLSL).

It belongs to the UPF0324 family.

The protein resides in the cell membrane. In Streptococcus pyogenes serotype M6 (strain ATCC BAA-946 / MGAS10394), this protein is UPF0324 membrane protein M6_Spy0799.